The chain runs to 447 residues: Phosphoglucosamine mutase (447 aa).

S102 (phosphoserine intermediate) is an active-site residue. Mg(2+)-binding residues include S102, D241, D243, and D245. The residue at position 102 (S102) is a Phosphoserine.

This sequence belongs to the phosphohexose mutase family. Mg(2+) is required as a cofactor. Activated by phosphorylation.

It catalyses the reaction alpha-D-glucosamine 1-phosphate = D-glucosamine 6-phosphate. Its function is as follows. Catalyzes the conversion of glucosamine-6-phosphate to glucosamine-1-phosphate. This is Phosphoglucosamine mutase from Pseudoalteromonas atlantica (strain T6c / ATCC BAA-1087).